A 212-amino-acid chain; its full sequence is Dephospho-CoA kinase (212 aa).

The DPCK domain occupies 3 to 204 (ILGLTGSIGM…GSRPAAPVGG (202 aa)). 11–16 (GMGKST) serves as a coordination point for ATP.

It belongs to the CoaE family.

The protein resides in the cytoplasm. It catalyses the reaction 3'-dephospho-CoA + ATP = ADP + CoA + H(+). It participates in cofactor biosynthesis; coenzyme A biosynthesis; CoA from (R)-pantothenate: step 5/5. In terms of biological role, catalyzes the phosphorylation of the 3'-hydroxyl group of dephosphocoenzyme A to form coenzyme A. This chain is Dephospho-CoA kinase, found in Paramagnetospirillum magneticum (strain ATCC 700264 / AMB-1) (Magnetospirillum magneticum).